The sequence spans 192 residues: Signal peptidase complex catalytic subunit SEC11C (192 aa).

At valine 2–arginine 28 the chain is on the cytoplasmic side. Residues glutamine 29–tryptophan 48 traverse the membrane as a helical; Signal-anchor for type II membrane protein segment. Residues lysine 49–serine 192 lie on the Lumenal side of the membrane. Residues serine 68, histidine 108, and aspartate 134 each act as charge relay system in the active site. A C-terminal short (CTS) helix region spans residues alanine 177 to leucine 188.

This sequence belongs to the peptidase S26B family. As to quaternary structure, component of the signal peptidase complex paralog C (SPC-C) composed of a catalytic subunit SEC11C and three accessory subunits SPCS1, SPCS2 and SPCS3. Within the complex, interacts with SPCS2 and SPCS3. The complex induces a local thinning of the ER membrane which is used to measure the length of the signal peptide (SP) h-region of protein substrates. This ensures the selectivity of the complex towards h-regions shorter than 18-20 amino acids. May undergo processing at the N-terminus.

Its subcellular location is the endoplasmic reticulum membrane. The catalysed reaction is Cleavage of hydrophobic, N-terminal signal or leader sequences from secreted and periplasmic proteins.. Catalytic component of the signal peptidase complex (SPC) which catalyzes the cleavage of N-terminal signal sequences from nascent proteins as they are translocated into the lumen of the endoplasmic reticulum. Specifically cleaves N-terminal signal peptides that contain a hydrophobic alpha-helix (h-region) shorter than 18-20 amino acids. The chain is Signal peptidase complex catalytic subunit SEC11C (SEC11C) from Canis lupus familiaris (Dog).